Reading from the N-terminus, the 452-residue chain is 1-aminocyclopropane-1-carboxylate synthase 3 (452 aa).

At lysine 283 the chain carries N6-(pyridoxal phosphate)lysine.

This sequence belongs to the class-I pyridoxal-phosphate-dependent aminotransferase family. It depends on pyridoxal 5'-phosphate as a cofactor. As to expression, expressed in leaves. Expressed in roots and leaf blades. Expressed at low levels in leaf sheaths and shoot bases.

The enzyme catalyses S-adenosyl-L-methionine = 1-aminocyclopropane-1-carboxylate + S-methyl-5'-thioadenosine + H(+). The protein operates within alkene biosynthesis; ethylene biosynthesis via S-adenosyl-L-methionine; ethylene from S-adenosyl-L-methionine: step 1/2. Catalyzes the formation of 1-aminocyclopropane-1-carboxylate, a direct precursor of ethylene in higher plants. This Oryza sativa subsp. japonica (Rice) protein is 1-aminocyclopropane-1-carboxylate synthase 3.